A 476-amino-acid polypeptide reads, in one-letter code: Glycogen synthase (476 aa).

Lys15 contacts ADP-alpha-D-glucose.

This sequence belongs to the glycosyltransferase 1 family. Bacterial/plant glycogen synthase subfamily.

It carries out the reaction [(1-&gt;4)-alpha-D-glucosyl](n) + ADP-alpha-D-glucose = [(1-&gt;4)-alpha-D-glucosyl](n+1) + ADP + H(+). Its pathway is glycan biosynthesis; glycogen biosynthesis. Its function is as follows. Synthesizes alpha-1,4-glucan chains using ADP-glucose. This chain is Glycogen synthase, found in Haemophilus influenzae (strain PittGG).